The chain runs to 536 residues: Multifunctional cytochrome P450 monooxygenase af510 (536 aa).

Residues 4-24 (ELSTLQLSCVAFVAFMAVLVF) traverse the membrane as a helical segment. Residues Asn210 and Asn293 are each glycosylated (N-linked (GlcNAc...) asparagine). Position 448 (Cys448) interacts with heme.

Belongs to the cytochrome P450 family. It depends on heme as a cofactor.

The protein localises to the membrane. It carries out the reaction (+)-exo-beta-bergamotene + 2 reduced [NADPH--hemoprotein reductase] + 3 O2 = 5-dehydro-6-demethoxyfumagillol + 2 oxidized [NADPH--hemoprotein reductase] + 3 H2O + 2 H(+). The protein operates within secondary metabolite biosynthesis; terpenoid biosynthesis. In terms of biological role, multifunctional cytochrome P450 monooxygenase; part of the gene cluster that mediates the biosynthesis of fumagillin, a meroterpenoid that has numerous biological activities including irreversible inhibition of human type 2 methionine aminopeptidase (METAP2). Within the pathway, the multifunctional cytochrome P450 monooxygenase af510 acts as a 2,4,6-trichlorophenol monooxygenase that first performs the C-H hydroxylation at the bridgehead C5 position to yield 5R-hydroxyl-beta-trans-bergamotene. Subsequently, a four electron oxidation initiated at C-9 coupled to cleavage of the cyclobutane C5-C8 bond of the bicyclo[3.1.1] core yields the epoxyketone intermediate 5-keto-cordycol. An additional epoxidation reaction also catalyzed by af510 then furnishes the characteristic bisepoxide ketone 5-keto-demethoxyfumagillol. The pathway begins with the conversion of farnesyl pyrophosphate (FPP) to beta-trans-bergamotene by the membrane-bound beta-trans-bergamotene synthase af520. The multifunctional cytochrome P450 monooxygenase af510 then converts beta-trans-bergamotene into 5-keto-demethoxyfumagillol via several oxydation steps. 5-keto-demethoxyfumagillol is then subjected to successive C-6 hydroxylation and O-methylation by the dioxygenase af480 and O-methyltransferase af390-400, respectively, to yield 5-keto-fumagillol, which is then stereoselectively reduced by the keto-reductase af490 to 5R-hydroxy-seco-sesquiterpene. The next step is the polyketide transferase af380-catalyzed transfer of a dodecapentaenoyl group synthesized by the polyketide synthase af370 onto 5R-hydroxy-seco-sesquiterpene which leads to the production of prefumagillin. Finally, oxidative cleavage by the monooxygenase af470 converts prefumagillin to fumagillin. This is Multifunctional cytochrome P450 monooxygenase af510 from Aspergillus fumigatus (strain ATCC MYA-4609 / CBS 101355 / FGSC A1100 / Af293) (Neosartorya fumigata).